Reading from the N-terminus, the 96-residue chain is Cell division topological specificity factor (96 aa).

The protein belongs to the MinE family.

Functionally, prevents the cell division inhibition by proteins MinC and MinD at internal division sites while permitting inhibition at polar sites. This ensures cell division at the proper site by restricting the formation of a division septum at the midpoint of the long axis of the cell. In Nitrosococcus oceani (strain ATCC 19707 / BCRC 17464 / JCM 30415 / NCIMB 11848 / C-107), this protein is Cell division topological specificity factor.